The primary structure comprises 209 residues: GTP-binding protein RHO1 (209 aa).

At Ser-2 the chain carries N-acetylserine. 17-24 (GDGACGKT) provides a ligand contact to GTP. The Effector region signature appears at 39–47 (YVPTVFENY). GTP contacts are provided by residues 64-68 (DTAGQ) and 122-125 (CKVD). Residues 187 to 209 (KSKTNGKAKKNTTEKKKKKCVLL) are disordered. Residues 190–209 (TNGKAKKNTTEKKKKKCVLL) are compositionally biased toward basic residues. Cys-206 bears the Cysteine methyl ester mark. Cys-206 is lipidated: S-geranylgeranyl cysteine. A propeptide spans 207–209 (VLL) (removed in mature form).

The protein belongs to the small GTPase superfamily. Rho family. As to quaternary structure, interacts with BEM4; the interaction is direct. Interacts with SEC3; the interaction is direct. Interacts with the GAP BAG7. Interacts with the GAP LRG1. Interacts with the GAP SAC7. Interacts with the GAP RDI1. Interacts with the 1,3-beta-glucan synthase component FKS1. Interacts with the protein kinase PKC1. Interacts with the G protein beta subunit STE4. Interacts with SKN7. Interacts with TUS1. Interacts with BNI1.

The protein localises to the cell membrane. Its subcellular location is the endosome membrane. It is found in the peroxisome membrane. The catalysed reaction is GTP + H2O = GDP + phosphate + H(+). Alternates between an inactive form bound to GDP and an active form bound to GTP. Activated by the guanine nucleotide-exchange factors (GEFs) ROM1, ROM2 and TUS1, and inactivated by GTPase-activating proteins (GAPs) BAG7, BEM2, LRG1, and SAC7, and the Rho GDP-dissociation inhibitor RDI1. The different GAPs regulate RHO1 in a target-specific manner. Its function is as follows. Acts as a central regulator in the cell wall integrity signaling pathway, which is regulated by the cell cycle and in response to various types of cell wall stress. Integrates signals from different cell surface sensors, and activates a set of effectors, regulating processes including beta-glucan synthesis at the site of wall remodeling, gene expression related to cell wall biogenesis, organization of the actin cytoskeleton, and protein- and secretory vesicle-targeting to the growth site. Activates the protein kinase C (PKC1) MAP kinase cascade, the beta-1,3-glucan synthase (FKS1), the formin BNI1, the exocyst component SEC3 and the transcription factor SKN7. In Saccharomyces cerevisiae (strain ATCC 204508 / S288c) (Baker's yeast), this protein is GTP-binding protein RHO1 (RHO1).